Here is a 188-residue protein sequence, read N- to C-terminus: Dual specificity protein phosphatase 18 (188 aa).

Residues 19-160 enclose the Tyrosine-protein phosphatase domain; the sequence is GLSQITKSLY…LIHYEFQLFG (142 aa). The active-site Phosphocysteine intermediate is the cysteine 104.

The protein belongs to the protein-tyrosine phosphatase family. Non-receptor class dual specificity subfamily. As to expression, widely expressed with highest levels in liver, brain, ovary and testis.

It is found in the cytoplasm. The protein resides in the nucleus. It localises to the mitochondrion inner membrane. It carries out the reaction O-phospho-L-tyrosyl-[protein] + H2O = L-tyrosyl-[protein] + phosphate. The enzyme catalyses O-phospho-L-seryl-[protein] + H2O = L-seryl-[protein] + phosphate. It catalyses the reaction O-phospho-L-threonyl-[protein] + H2O = L-threonyl-[protein] + phosphate. Its activity is regulated as follows. Activated by manganese ions, inhibited by iodoacetic acid. Its function is as follows. Can dephosphorylate single and diphosphorylated synthetic MAPK peptides, with preference for the phosphotyrosine and diphosphorylated forms over phosphothreonine. In vitro, dephosphorylates p-nitrophenyl phosphate (pNPP). The sequence is that of Dual specificity protein phosphatase 18 (DUSP18) from Homo sapiens (Human).